The primary structure comprises 300 residues: Ribosomal protein bS6--L-glutamate ligase (300 aa).

One can recognise an ATP-grasp domain in the interval 104-287; it reads MQLLARQGID…IAGKMIRWIE (184 aa). Residues K141, 178 to 179, D187, and 211 to 213 each bind ATP; these read EY and RSN. Residues D248, E260, and N262 each contribute to the Mg(2+) site. Mn(2+) contacts are provided by D248, E260, and N262.

Belongs to the RimK family. Mg(2+) serves as cofactor. It depends on Mn(2+) as a cofactor.

Its function is as follows. An L-glutamate ligase that catalyzes the ATP-dependent post-translational addition of glutamate residues to the C-terminus of ribosomal protein bS6 (RpsF). Is also able to catalyze the synthesis of poly-alpha-glutamate in vitro, via ATP hydrolysis from unprotected glutamate as substrate. The number of glutamate residues added to either RpsF or to poly-alpha-glutamate changes with pH. In Escherichia coli O139:H28 (strain E24377A / ETEC), this protein is Ribosomal protein bS6--L-glutamate ligase.